We begin with the raw amino-acid sequence, 735 residues long: Transcription factor RFX4 (735 aa).

Residues S25–P59 form a disordered region. Residues N44–K126 mediate DNA binding. Residues T61 to E136 constitute a DNA-binding region (RFX-type winged-helix). Positions R315–E487 are necessary for dimerization.

It belongs to the RFX family.

The protein resides in the nucleus. Functionally, may activate transcription by interacting directly with the X-box. This is Transcription factor RFX4 (rfx4) from Danio rerio (Zebrafish).